The chain runs to 109 residues: Large ribosomal subunit protein uL22 (109 aa).

The protein belongs to the universal ribosomal protein uL22 family. In terms of assembly, part of the 50S ribosomal subunit.

Functionally, this protein binds specifically to 23S rRNA; its binding is stimulated by other ribosomal proteins, e.g. L4, L17, and L20. It is important during the early stages of 50S assembly. It makes multiple contacts with different domains of the 23S rRNA in the assembled 50S subunit and ribosome. Its function is as follows. The globular domain of the protein is located near the polypeptide exit tunnel on the outside of the subunit, while an extended beta-hairpin is found that lines the wall of the exit tunnel in the center of the 70S ribosome. This chain is Large ribosomal subunit protein uL22, found in Methylobacillus flagellatus (strain ATCC 51484 / DSM 6875 / VKM B-1610 / KT).